A 119-amino-acid chain; its full sequence is Beta-2-microglobulin (119 aa).

A signal peptide spans 1–20 (MGRFVAVALLVLLSLSGLET). In terms of domain architecture, Ig-like C1-type spans 25 to 114 (PKIQVYSRHP…VTFSTPKTVK (90 aa)). Residues Cys45 and Cys100 are joined by a disulfide bond.

This sequence belongs to the beta-2-microglobulin family. Heterodimer of an alpha chain and a beta chain. Beta-2-microglobulin is the beta-chain of major histocompatibility complex class I molecules.

The protein resides in the secreted. In terms of biological role, component of the class I major histocompatibility complex (MHC). Involved in the presentation of peptide antigens to the immune system. This is Beta-2-microglobulin (B2M) from Callicebus personatus nigrifrons (Black-fronted titi).